We begin with the raw amino-acid sequence, 207 residues long: Large ribosomal subunit protein uL4 (207 aa).

The segment at 49–78 (HAVKNRSAVSGGGRKPWRQKGTGRARQGSI) is disordered.

The protein belongs to the universal ribosomal protein uL4 family. Part of the 50S ribosomal subunit.

Its function is as follows. One of the primary rRNA binding proteins, this protein initially binds near the 5'-end of the 23S rRNA. It is important during the early stages of 50S assembly. It makes multiple contacts with different domains of the 23S rRNA in the assembled 50S subunit and ribosome. In terms of biological role, forms part of the polypeptide exit tunnel. This chain is Large ribosomal subunit protein uL4, found in Streptococcus pyogenes serotype M49 (strain NZ131).